Here is a 391-residue protein sequence, read N- to C-terminus: Terminal nucleotidyltransferase 5C (391 aa).

Belongs to the TENT family. Interacts with BCCIP and PABPC1; the interaction has no effect on TENT5C poly(A) polymerase function. Interacts with PLK4; this interaction leads to the TENT5C recruitment into the centrosome.

The protein resides in the nucleus. It is found in the cytoplasm. It localises to the cytoskeleton. The protein localises to the microtubule organizing center. Its subcellular location is the centrosome. It catalyses the reaction RNA(n) + ATP = RNA(n)-3'-adenine ribonucleotide + diphosphate. Functionally, catalyzes the transfer of one adenosine molecule from an ATP to an mRNA poly(A) tail bearing a 3'-OH terminal group and enhances mRNA stability and gene expression. Can also elongate RNA oligos ending with uridine molecule, provided that the sequence is adenosine-rich. Mainly targets mRNAs encoding endoplasmic reticulum-targeted protein. This chain is Terminal nucleotidyltransferase 5C, found in Macaca fascicularis (Crab-eating macaque).